Here is a 476-residue protein sequence, read N- to C-terminus: RuvB-like helicase 2 (476 aa).

An ATP-binding site is contributed by 72–80 (VGPPSTGKT).

It belongs to the RuvB family. In terms of assembly, may form heterododecamers with RVB1. Component of the SWR1 chromatin remodeling complex, the INO80 chromatin remodeling complex, and of the R2TP complex.

It is found in the nucleus. The catalysed reaction is ATP + H2O = ADP + phosphate + H(+). In terms of biological role, DNA helicase which participates in several chromatin remodeling complexes, including the SWR1 and the INO80 complexes. The SWR1 complex mediates the ATP-dependent exchange of histone H2A for the H2A variant HZT1 leading to transcriptional regulation of selected genes by chromatin remodeling. The INO80 complex remodels chromatin by shifting nucleosomes and is involved in DNA repair. Also involved in pre-rRNA processing. In Mycosarcoma maydis (Corn smut fungus), this protein is RuvB-like helicase 2 (RVB2).